Consider the following 473-residue polypeptide: Sensor histidine kinase YclK (473 aa).

Residues 1–9 (MMKIKYLYQ) lie on the Cytoplasmic side of the membrane. A helical transmembrane segment spans residues 10-30 (LLLSHISILILAFVIIISLFS). Residues 31–164 (HFVKEFAYQN…GVEQMVNQVN (134 aa)) lie on the Extracellular side of the membrane. Residues 165–185 (LYMFYAVISTLVITILVSWLL) traverse the membrane as a helical segment. Topologically, residues 186–473 (SKFHVKRIQK…IRLPLTAKQQ (288 aa)) are cytoplasmic. The 53-residue stretch at 187–239 (KFHVKRIQKLREATDKVASGDYDIHLENSYGDEIGVLASDFNIMAKKLKQSRD) folds into the HAMP domain. The Histidine kinase domain maps to 254-470 (DVSHELKTPL…KFIIRLPLTA (217 aa)). His-257 carries the phosphohistidine; by autocatalysis modification.

It is found in the cell membrane. It catalyses the reaction ATP + protein L-histidine = ADP + protein N-phospho-L-histidine.. In terms of biological role, could be member of the two-component regulatory system YclK/YclJ. Potentially phosphorylates YclJ. The chain is Sensor histidine kinase YclK (yclK) from Bacillus subtilis (strain 168).